The sequence spans 136 residues: Phospholipase A2 (136 aa).

Ca(2+)-binding residues include Trp8, Gly10, and Gly12. Intrachain disulfides connect Cys9–Cys31, Cys30–Cys70, Cys37–Cys63, Cys61–Cys95, and Cys105–Cys115. Asn16 is a glycosylation site (N-linked (GlcNAc...) asparagine). The active site involves His34. Asp35 contacts Ca(2+). Asp64 is an active-site residue.

The protein belongs to the phospholipase A2 family. Ca(2+) is required as a cofactor. Expressed by the venom gland.

It localises to the secreted. The catalysed reaction is a 1,2-diacyl-sn-glycero-3-phosphocholine + H2O = a 1-acyl-sn-glycero-3-phosphocholine + a fatty acid + H(+). Its function is as follows. PLA2 catalyzes the calcium-dependent hydrolysis of the 2-acyl groups in 3-sn-phosphoglycerides. The sequence is that of Phospholipase A2 from Bombus pensylvanicus (American bumblebee).